A 492-amino-acid chain; its full sequence is Probable cobyric acid synthase (492 aa).

A GATase cobBQ-type domain is found at 252 to 444 (PIEVNIVKFS…FHGILENFEF (193 aa)). Cys330 functions as the Nucleophile in the catalytic mechanism. His436 is a catalytic residue.

It belongs to the CobB/CobQ family. CobQ subfamily.

Its pathway is cofactor biosynthesis; adenosylcobalamin biosynthesis. Catalyzes amidations at positions B, D, E, and G on adenosylcobyrinic A,C-diamide. NH(2) groups are provided by glutamine, and one molecule of ATP is hydrogenolyzed for each amidation. The sequence is that of Probable cobyric acid synthase from Methanococcus maripaludis (strain C7 / ATCC BAA-1331).